Consider the following 375-residue polypeptide: MGKDFKSMVTRCIYVGKENDNVKKLKTATEELKDLRNIVMKRVKMYEDQQKLKRLEKVQVWLRQADVAIKEAEEMLITLMSSSSSNGSSMMSFHKLDKKLCKKLKEVQEIKSRGTFDVVVENSGIGSGSMMISNVDRDDQTVGLEAVSGLVWRCMTVDNTGIIGLYGVEGVGKTTVLTQVNNRLLQHKLNGFDFVIWVFVSKNVNLEKIQDTIREKIGFLDRSWMSKTEEEKAGKIFEILSKRRFALFLDDVWEKVDLVKAGVPPPDGLNRSKIVFTTCSDEVCQEMGAQTKIKMEKLPWERAWDLFKMNAGEEIVKSHPDITKVAQEVAAKCDGLPLALVTIGRAMASKKTPQEWRDALYILSTSPPNFSGPIL.

Residues 17 to 49 adopt a coiled-coil conformation; it reads KENDNVKKLKTATEELKDLRNIVMKRVKMYEDQ. Positions 158-372 constitute an NB-ARC domain; the sequence is DNTGIIGLYG…LSTSPPNFSG (215 aa). Residue 167–174 participates in ATP binding; it reads GVEGVGKT.

In terms of biological role, potential disease resistance protein. The protein is Putative disease resistance protein At3g15700 of Arabidopsis thaliana (Mouse-ear cress).